We begin with the raw amino-acid sequence, 337 residues long: RNA 3'-terminal phosphate cyclase (337 aa).

ATP-binding positions include glutamine 100 and 281-285 (YMGDQ). Histidine 306 functions as the Tele-AMP-histidine intermediate in the catalytic mechanism.

It belongs to the RNA 3'-terminal cyclase family. Type 1 subfamily.

The protein localises to the cytoplasm. The enzyme catalyses a 3'-end 3'-phospho-ribonucleotide-RNA + ATP = a 3'-end 2',3'-cyclophospho-ribonucleotide-RNA + AMP + diphosphate. Its function is as follows. Catalyzes the conversion of 3'-phosphate to a 2',3'-cyclic phosphodiester at the end of RNA. The mechanism of action of the enzyme occurs in 3 steps: (A) adenylation of the enzyme by ATP; (B) transfer of adenylate to an RNA-N3'P to produce RNA-N3'PP5'A; (C) and attack of the adjacent 2'-hydroxyl on the 3'-phosphorus in the diester linkage to produce the cyclic end product. The biological role of this enzyme is unknown but it is likely to function in some aspects of cellular RNA processing. In Methanothermobacter thermautotrophicus (strain ATCC 29096 / DSM 1053 / JCM 10044 / NBRC 100330 / Delta H) (Methanobacterium thermoautotrophicum), this protein is RNA 3'-terminal phosphate cyclase (rtcA).